Consider the following 122-residue polypeptide: MSETAQSYDPTEDFQALVVTDSAAARVAQLIAQEESDDLKLRVFVSGGGCSGFQYGFTFDERIEEGDSVVEKDGVTFLVDPMSSQYLMGAEIDFVEGIEGEQFVIRNPNATTTCGCGSSFSI.

Residues Cys-50, Cys-114, and Cys-116 each contribute to the iron-sulfur cluster site.

It belongs to the HesB/IscA family. As to quaternary structure, homodimer. Iron-sulfur cluster is required as a cofactor.

Required for insertion of 4Fe-4S clusters for at least IspG. The chain is Iron-sulfur cluster insertion protein ErpA from Alkalilimnicola ehrlichii (strain ATCC BAA-1101 / DSM 17681 / MLHE-1).